A 342-amino-acid chain; its full sequence is Acetoin:2,6-dichlorophenolindophenol oxidoreductase subunit beta (342 aa).

As to quaternary structure, tetramer of 2 alpha and 2 beta subunits.

The protein operates within ketone degradation; acetoin degradation. Functionally, catalyzes the 2,6-dichlorophenolindophenol-dependent cleavage of acetoin into acetate and acetaldehyde. The chain is Acetoin:2,6-dichlorophenolindophenol oxidoreductase subunit beta (acoB) from Bacillus subtilis (strain 168).